The sequence spans 444 residues: Probable ribonuclease FAU-1 (444 aa).

Belongs to the FAU-1 family.

In terms of biological role, probable RNase involved in rRNA stability through maturation and/or degradation of precursor rRNAs. Binds to RNA in loop regions with AU-rich sequences. The chain is Probable ribonuclease FAU-1 from Pyrobaculum arsenaticum (strain DSM 13514 / JCM 11321 / PZ6).